The following is a 1543-amino-acid chain: Tubby-related protein 4 (1543 aa).

WD repeat units lie at residues 6–72 (EHGP…STPQ), 73–115 (RINF…YEGR), 116–158 (WSVE…SGQR), 159–237 (HWSS…SDDY), 238–276 (APPQ…YDDL), 277–334 (SPTV…GEHI), and 335–372 (FTLD…RVEH). One can recognise an SOCS box domain in the interval 364 to 414 (ALYVVRVEHRVSSLQLLCQQAIASTLREDKDVSKLTLPPRLCSYLSTAFIP). Disordered regions lie at residues 530 to 577 (SPKI…SVGS) and 829 to 850 (TKIN…TAAP). At Ser577 the chain carries Phosphoserine. Asymmetric dimethylarginine is present on residues Arg945 and Arg950. Disordered regions lie at residues 1004-1058 (SPRA…HTAS), 1326-1355 (VPQR…AITE), and 1367-1453 (DFNS…ASEK). The segment covering 1036 to 1050 (TCSQCSGTGPSSQPG) has biased composition (polar residues). Over residues 1329 to 1347 (RTEKFGKKNRKRLDSRAEE) the composition is skewed to basic and acidic residues. Phosphoserine occurs at positions 1343 and 1374. The segment covering 1443 to 1453 (EEAKCRRASEK) has biased composition (basic and acidic residues). Residues 1466–1543 (VMANKQPLWN…ALANVTQRLK (78 aa)) are TUB.

It belongs to the TUB family. As to expression, expressed mainly in the brain, skeletal muscle, testis and kidney.

It localises to the cytoplasm. The protein operates within protein modification; protein ubiquitination. Its function is as follows. May be a substrate-recognition component of a SCF-like ECS (Elongin-Cullin-SOCS-box protein) E3 ubiquitin ligase complex which mediates the ubiquitination and subsequent proteasomal degradation of target proteins. This is Tubby-related protein 4 (TULP4) from Homo sapiens (Human).